The chain runs to 124 residues: MNLEYVQVVQKFNQVLLELTKKVCTVVGGSKPTYWYHHIRRVCSECPSMPMSMIGPYLNVYKSQILTKDKNFFMNFDPAHNEYTFIIQKLKEAARNMPEDELEQYWVKLLFLLKSYIKCKPFIN.

This sequence belongs to the asfivirus H124R family.

The protein resides in the virion. This is an uncharacterized protein from Ornithodoros (relapsing fever ticks).